The following is a 1699-amino-acid chain: Genome polyprotein (1699 aa).

Residues 1 to 19 (MKMASNDASAAAVVNSNND) show a composition bias toward low complexity. Residues 1–78 (MKMASNDASA…PPPPPNGEDE (78 aa)) form a disordered region. The segment at 1 to 116 (MKMASNDASA…AFSVPPLNQR (116 aa)) is interaction with host MAP1LC3A/LC3. A compositionally biased stretch (pro residues) spans 46–74 (QPPPRETPQRPPRPPTPELVKKIPPPPPN). The segment at 117 to 330 (ENRDAKEPLT…APLLGDYELQ (214 aa)) is interaction with NTPase. The tract at residues 233–330 (RPYQDWNRKP…APLLGDYELQ (98 aa)) is interaction with NS4. Host ER membrane association stretches follow at residues 250-281 (KLKK…RPLN) and 292-330 (TFAG…YELQ). The interval 331-509 (GPEDLAVELV…GKTHLARELA (179 aa)) is interaction with NS1-2, NS4 and homooligomerization. Residues 465–632 (LARIAAARSL…EKAKRDFPGQ (168 aa)) form the SF3 helicase domain. An ATP-binding site is contributed by 495 to 502 (GKPGIGKT). The important for mitochondrion targeting stretch occupies residues 586-691 (AIIITTNLAN…ASGLLHERLD (106 aa)). The functions as endoplasmic reticulum export signal stretch occupies residues 764-770 (YTLESDG). Residues 801–850 (RIRYYVKCVQEALYSIIQIAGAAFVTTRIVKRMNIQDLWSKPQVEDTEDT) are host membrane association. The interval 843-894 (QVEDTEDTANKDGCPKPKDDEEFVVSSDDIKTEGKKGKNKTGRGKKHTAFSS) is disordered. The segment covering 850–861 (TANKDGCPKPKD) has biased composition (basic and acidic residues). Positions 879-890 (GKNKTGRGKKHT) are enriched in basic residues. An acidic region spans residues 899 to 904 (DEEYDE). At Tyr-902 the chain carries O-(5'-phospho-RNA)-tyrosine. The interval 992–1008 (WADDDRSVDYNEKLDFE) is interaction with host EIF4G. Residues 1009–1189 (APPSIWSRIV…QGSEGEATLE (181 aa)) form the Peptidase C37 domain. Residues His-1038, Glu-1062, and Cys-1147 each act as for 3CLpro activity in the active site. The RdRp catalytic domain occupies 1425–1546 (KYHYDADYSR…STDINLNPEK (122 aa)). Positions 1429, 1431, 1533, and 1534 each coordinate Mg(2+).

Homodimer. Homooligomer. Interacts with NTPase; this interaction increases the proapoptotic activity of the NTPase and is crucial for the formation of the viral replication complex. Interacts with NS4; this interaction is crucial for the formation of the viral replication complex. Interacts (via N-terminus) with host VAPA. Interacts with host MAP1LC3A/LC3; this interaction does not seem to be linked to host autophagy, but rather plays a role in the formation of viral factories. As to quaternary structure, homooligomer. Interacts with NS1-2; this interaction increases the proapoptotic activity of the NTPase and is crucial for the formation of the viral replication complex. Interacts with NS4; this interaction increases the proapoptotic activity of the NTPase. In terms of assembly, homodimer. Monomer; in solution. Interacts with NTPase; this interaction increases the proapoptotic activity of the NTPase. Interacts with NS1-2; this interaction is crucial for the formation of the viral replication complex. As to quaternary structure, monomer. Interacts with the RNA-directed RNA polymerase; this interaction induces the multimerization of the RdRp and enhances its activity. Interacts with host IEF4G1; this interaction plays a role in translation of viral proteins. In terms of assembly, homohexamer; also forms fibrous hexameric oligomer. Interacts with the viral genome-linked protein; this interaction induces the multimerization of the RdRp and enhances its activity. Mg(2+) serves as cofactor. Requires Mn(2+) as cofactor. Specific enzymatic cleavages in vivo yield mature proteins. 3CLpro is first autocatalytically cleaved, then processes the whole polyprotein. NS1/2-3 and NS3-4 sites are cleaved rapidly and NS4-5, NS5-6, and NS6-7 sites are processed subsequently and less efficiently. Post-translationally, VPg is uridylylated by the polymerase and is covalently attached to the 5'-end of the polyadenylated genomic and subgenomic RNAs. This uridylylated form acts as a nucleotide-peptide primer for the polymerase. In terms of processing, cleaved by host CASP3/caspase 3 at 18-22 h.p.i. The cleavage allows NS1 secretion, which is essential for intestinal infection and resistance to IFN-lambda.

It is found in the host endoplasmic reticulum membrane. It localises to the secreted. The protein localises to the host mitochondrion. The protein resides in the host Golgi apparatus membrane. Its subcellular location is the host cytoplasm. It is found in the host perinuclear region. It catalyses the reaction a ribonucleoside 5'-triphosphate + H2O = a ribonucleoside 5'-diphosphate + phosphate + H(+). The catalysed reaction is Endopeptidase with a preference for cleavage when the P1 position is occupied by Glu-|-Xaa and the P1' position is occupied by Gly-|-Yaa.. The enzyme catalyses RNA(n) + a ribonucleoside 5'-triphosphate = RNA(n+1) + diphosphate. In terms of biological role, induces the proliferation of the host smooth ER membranes forming long tubular structures. These remodeled membranes probably form the viral factories that contain the replication complex. May play a role in viral replication by interacting with host VAPA, a vesicle-associated membrane protein that plays a role in SNARE-mediated vesicle fusion. This interaction may target replication complex to intracellular membranes. Functionally, displays NTPase activity, but no helicase activity. Displays RNA chaperone-like activity and destabilizes dsRNA. Induces the formation of convoluted membranes derived from the host ER. These remodeled membranes probably form the viral factories that contain the replication complex. Initiates host cell death by targeting the mitochondrial outer membrane, leading to the permeabilization of mitochondria, programmed host cell death and viral egress. Externalization of host cardiolipin seems to be involved in the process. Probably plays a role in preventing the assembly of host stress granules. Its function is as follows. Probable key protein responsible for the formation of membrane alterations by the virus. Induces the formation of convoluted membranes derived from the host ER. These remodeled membranes probably form the viral factories that contain the replication complex. May play a role in targeting replication complex to intracellular membranes. Viral genome-linked protein is covalently linked to the 5'-end of the positive-strand, negative-strand genomic RNAs and subgenomic RNA. Acts as a genome-linked replication primer. May recruit ribosome to viral RNA thereby promoting viral proteins translation. Interacts with host translation initiation complex to allow the translation of viral proteins. Induces the formation of aggregates of RNA-directed RNA polymerase in the presence of RNA. Through its interaction with the viral RNA-directed RNA polymerase, plays a crucial role in enhancing the polymerase activity. In terms of biological role, processes the polyprotein. 3CLpro-RdRp is first released by autocleavage, then all other proteins are cleaved. May cleave polyadenylate-binding protein thereby inhibiting cellular translation. Functionally, replicates genomic and antigenomic RNA by recognizing replications specific signals. Also transcribes a subgenomic mRNA by initiating RNA synthesis internally on antigenomic RNA. This sgRNA codes for structural proteins. Catalyzes the covalent attachment VPg with viral RNAs. This Lordsdale virus (strain GII/Human/United Kingdom/Lordsdale/1993) (Human enteric calicivirus) protein is Genome polyprotein.